We begin with the raw amino-acid sequence, 173 residues long: Methylated-DNA--protein-cysteine methyltransferase (173 aa).

The Nucleophile; methyl group acceptor role is filled by Cys143.

Belongs to the MGMT family.

It is found in the cytoplasm. It carries out the reaction a 6-O-methyl-2'-deoxyguanosine in DNA + L-cysteinyl-[protein] = S-methyl-L-cysteinyl-[protein] + a 2'-deoxyguanosine in DNA. The enzyme catalyses a 4-O-methyl-thymidine in DNA + L-cysteinyl-[protein] = a thymidine in DNA + S-methyl-L-cysteinyl-[protein]. In terms of biological role, involved in the cellular defense against the biological effects of O6-methylguanine (O6-MeG) and O4-methylthymine (O4-MeT) in DNA. Repairs the methylated nucleobase in DNA by stoichiometrically transferring the methyl group to a cysteine residue in the enzyme. This is a suicide reaction: the enzyme is irreversibly inactivated. In Pyrococcus sp. (strain NA2), this protein is Methylated-DNA--protein-cysteine methyltransferase.